Here is a 345-residue protein sequence, read N- to C-terminus: L-threonine 3-dehydrogenase (345 aa).

Cys38 is a binding site for Zn(2+). Active-site charge relay system residues include Thr40 and His43. Zn(2+) is bound by residues His63, Glu64, Cys93, Cys96, Cys99, and Cys107. Residues Ile176, Asp196, Arg201, 263-265 (LGT), and 287-288 (VT) contribute to the NAD(+) site.

The protein belongs to the zinc-containing alcohol dehydrogenase family. In terms of assembly, homotetramer. Zn(2+) serves as cofactor.

Its subcellular location is the cytoplasm. The enzyme catalyses L-threonine + NAD(+) = (2S)-2-amino-3-oxobutanoate + NADH + H(+). It participates in amino-acid degradation; L-threonine degradation via oxydo-reductase pathway; glycine from L-threonine: step 1/2. Its function is as follows. Catalyzes the NAD(+)-dependent oxidation of L-threonine to 2-amino-3-ketobutyrate. In Cutibacterium acnes (strain DSM 16379 / KPA171202) (Propionibacterium acnes), this protein is L-threonine 3-dehydrogenase.